Here is a 275-residue protein sequence, read N- to C-terminus: Putative hydroxypyruvate isomerase (275 aa).

Residues Glu147 and Glu246 each act as proton donor/acceptor in the active site.

The protein belongs to the hyi family.

The enzyme catalyses 3-hydroxypyruvate = 2-hydroxy-3-oxopropanoate. Functionally, catalyzes the reversible isomerization between hydroxypyruvate and 2-hydroxy-3-oxopropanoate (also termed tartronate semialdehyde). This Xenopus laevis (African clawed frog) protein is Putative hydroxypyruvate isomerase (hyi).